A 538-amino-acid polypeptide reads, in one-letter code: MWSGRSSFTSLVVGVFVVYVVHTCWVMYGIVYTRPCSGDANCIQPYLARRPKLQLSVYTTTRSHLGAENNIDLVLNVEDFDVESKFERTVNVSVPKKTRNNGTLYAYIFLHHAGVLPWHDGKQVHLVSPLTTYMVPKPEEINLLTGESDTQQIEAEKKPTSALDEPVSHWRPRLALNVMADNFVFDGSSLPADVHRYMKMIQLGKTVHYLPILFIDQLSNRVKDLMVINRSTTELPLTVSYDKVSLGRLRFWIHMQDAVYSLQQFGFSEKDADEVKGIFVDTNLYFLALTFFVAAFHLLFDFLAFKNDISFWKKKKSMIGMSTKAVLWRCFSTVVIFLFLLDEQTSLLVLVPAGVGAAIELWKVKKALKMTILWRGLMPEFELGTYSESERKTEEYDTQAMKYLSYLLYPLCVGGAVYSLLNIKYKSWYSWLINSFVNGVYAFGFLFMLPQLFVNYKLKSVAHLPWKAFTYKAFNTFIDDVFAFIITMPTSHRLACFRDDVVFLVYLYQRWLYPVDKRRVNEFGESYEEKAARAPHTD.

The Cytoplasmic segment spans residues M1–S10. A helical transmembrane segment spans residues L11–V31. Residues Y32–L284 lie on the Extracellular side of the membrane. N-linked (GlcNAc...) asparagine glycans are attached at residues N91 and N101. A helical membrane pass occupies residues Y285–F305. Residues K306 to K324 lie on the Cytoplasmic side of the membrane. Residues A325–D342 traverse the membrane as a helical segment. Residues E343–S346 lie on the Extracellular side of the membrane. A helical membrane pass occupies residues L347 to V364. At K365–K402 the chain is on the cytoplasmic side. Residues Y403 to I423 traverse the membrane as a helical segment. Over K424–W428 the chain is Extracellular. The helical transmembrane segment at Y429–L449 threads the bilayer. At P450–D538 the chain is on the cytoplasmic side.

Belongs to the CLPTM1 family.

Its subcellular location is the endoplasmic reticulum membrane. It catalyses the reaction a 6-(alpha-D-glucosaminyl)-1-(1,2-diacyl-sn-glycero-3-phospho)-1D-myo-inositol(in) = a 6-(alpha-D-glucosaminyl)-1-(1,2-diacyl-sn-glycero-3-phospho)-1D-myo-inositol(out). The enzyme catalyses 6-(alpha-D-glucosaminyl)-(1-octadecanoyl,2-(9Z)-octadecenoyl-sn-glycero-3-phospho)-1D-myo-inositol(in) = 6-(alpha-D-glucosaminyl)-(1-octadecanoyl,2-(9Z)-octadecenoyl-sn-glycero-3-phospho)-1D-myo-inositol(out). The catalysed reaction is a 1,2-diacyl-sn-glycero-3-phospho-(1D-myo-inositol)(in) = a 1,2-diacyl-sn-glycero-3-phospho-(1D-myo-inositol)(out). It carries out the reaction a 1,2-diacyl-sn-glycero-3-phosphocholine(in) = a 1,2-diacyl-sn-glycero-3-phosphocholine(out). It catalyses the reaction a 1,2-diacyl-sn-glycero-3-phosphoethanolamine(in) = a 1,2-diacyl-sn-glycero-3-phosphoethanolamine(out). Its function is as follows. Scramblase that mediates the translocation of glucosaminylphosphatidylinositol (alpha-D-GlcN-(1-6)-(1,2-diacyl-sn-glycero-3-phospho)-1D-myo-inositol, GlcN-PI) across the endoplasmic reticulum (ER) membrane, from the cytosolic leaflet to the luminal leaflet of the ER membrane, where it participates in the biosynthesis of glycosylphosphatidylinositol (GPI). GPI is a lipid glycoconjugate involved in post-translational modification of proteins. Can also translocate 1,2-diacyl-sn-glycero-3-phospho-(1D-myo-inositol) (phosphatidylinositol or PI), as well as several other phospholipids (1,2-diacyl-sn-glycero-3-phosphocholine, 1,2-diacyl-sn-glycero-3-phosphoethanolamine), and N-acetylglucosaminylphosphatidylinositol (GlcNAc-PI) in vitro. The sequence is that of Lipid scramblase CLPTM1L (CLPTM1L) from Pongo abelii (Sumatran orangutan).